A 417-amino-acid chain; its full sequence is NADH-quinone oxidoreductase subunit D (417 aa).

The protein belongs to the complex I 49 kDa subunit family. NDH-1 is composed of 14 different subunits. Subunits NuoB, C, D, E, F, and G constitute the peripheral sector of the complex.

The protein resides in the cell inner membrane. It carries out the reaction a quinone + NADH + 5 H(+)(in) = a quinol + NAD(+) + 4 H(+)(out). Functionally, NDH-1 shuttles electrons from NADH, via FMN and iron-sulfur (Fe-S) centers, to quinones in the respiratory chain. The immediate electron acceptor for the enzyme in this species is believed to be ubiquinone. Couples the redox reaction to proton translocation (for every two electrons transferred, four hydrogen ions are translocated across the cytoplasmic membrane), and thus conserves the redox energy in a proton gradient. This Burkholderia ambifaria (strain MC40-6) protein is NADH-quinone oxidoreductase subunit D.